The following is a 171-amino-acid chain: Protein phosphatase 1 regulatory subunit 1A (171 aa).

Residue M1 is modified to N-acetylmethionine. The interval 1–171 (MEPDNSPRKI…PLDSQGASLV (171 aa)) is disordered. Positions 9–12 (KIQF) are essential for activity. The segment covering 19 to 29 (PHLDPEAAEQI) has biased composition (basic and acidic residues). At T35 the chain carries Phosphothreonine. The segment at 42-54 (TSDQSSPEIDEDR) is essential for activity. Phosphoserine is present on residues S43, S46, S47, and S67. Positions 122–146 (GSASRPDTPGTAQKSAESNPKTQEQ) are enriched in polar residues. The interaction with PPP1R15A stretch occupies residues 143–171 (TQEQCGVEPRTEDSSAHMLPLDSQGASLV).

This sequence belongs to the protein phosphatase inhibitor 1 family. In terms of assembly, interacts with PPP1R15A. Phosphorylation of Thr-35 is required for activity.

In terms of biological role, inhibitor of protein-phosphatase 1. This protein may be important in hormonal control of glycogen metabolism. Hormones that elevate intracellular cAMP increase I-1 activity in many tissues. I-1 activation may impose cAMP control over proteins that are not directly phosphorylated by PKA. Following a rise in intracellular calcium, I-1 is inactivated by calcineurin (or PP2B). Does not inhibit type-2 phosphatases. In Mus musculus (Mouse), this protein is Protein phosphatase 1 regulatory subunit 1A (Ppp1r1a).